A 304-amino-acid polypeptide reads, in one-letter code: Glycine--tRNA ligase alpha subunit (304 aa).

It belongs to the class-II aminoacyl-tRNA synthetase family. As to quaternary structure, tetramer of two alpha and two beta subunits.

It is found in the cytoplasm. It carries out the reaction tRNA(Gly) + glycine + ATP = glycyl-tRNA(Gly) + AMP + diphosphate. The polypeptide is Glycine--tRNA ligase alpha subunit (Pectobacterium carotovorum subsp. carotovorum (strain PC1)).